The chain runs to 809 residues: Leucine-rich repeat and calponin homology domain-containing protein (809 aa).

The interval 27–53 is disordered; it reads GSASLPGSGTGSGSGIGHAGNTSSSTS. Positions 34-44 are enriched in gly residues; sequence SGTGSGSGIGH. 9 LRR repeats span residues 72–96, 98–121, 122–144, 145–168, 170–189, 191–213, 214–236, 238–258, and 260–282; these read EAHF…GTKY, LTDT…VTTF, AFLE…VKQL, SSLT…CFLP, QVLL…LGRL, QTLT…LGEL, RSLR…LTCL, LISL…IRHM, and TLVE…CMRG. Disordered stretches follow at residues 295 to 373, 423 to 442, and 490 to 550; these read TKDE…LHCV, LSYA…QDDD, and KHPN…VDDV. Positions 319–336 are enriched in polar residues; that stretch reads HNSSGNVLEASTTGSTNN. Residues 351 to 368 are compositionally biased toward basic and acidic residues; sequence GLDKRWSHDAPTKSKTDS. Positions 518–532 are enriched in polar residues; that stretch reads NTLPKSIMKQNSNQI. In terms of domain architecture, Calponin-homology (CH) spans 662–776; that stretch reads QREETELMSQ…TVGELFRLHG (115 aa). Positions 783-809 are disordered; sequence GNSSGAATPTKSPTRTTRATMSPTPLA. Over residues 788 to 809 the composition is skewed to polar residues; it reads AATPTKSPTRTTRATMSPTPLA.

Its subcellular location is the cytoplasm. The protein localises to the cytoskeleton. It is found in the cell cortex. The protein resides in the cleavage furrow. Functionally, may play a role in the stabilization of the actin-rich cell cortex during cell division. In Drosophila melanogaster (Fruit fly), this protein is Leucine-rich repeat and calponin homology domain-containing protein.